The sequence spans 283 residues: Prolyl 4-hydroxylase 1 (283 aa).

The Cytoplasmic segment spans residues 1-6; the sequence is MAPAMK. Residues 7–27 traverse the membrane as a helical; Signal-anchor for type II membrane protein segment; sequence IVFGLLTFVTVGMVIGSLLQL. Topologically, residues 28-283 are lumenal; it reads AFINRLEDSY…TKWMRQKATS (256 aa). One can recognise a Fe2OG dioxygenase domain in the interval 162-279; sequence NGELIQVLRY…KWSATKWMRQ (118 aa). Positions 180, 182, and 260 each coordinate Fe cation. Lys-270 is a binding site for 2-oxoglutarate.

It belongs to the P4HA family. Fe(2+) is required as a cofactor. Requires L-ascorbate as cofactor.

Its subcellular location is the endoplasmic reticulum membrane. It catalyses the reaction L-prolyl-[collagen] + 2-oxoglutarate + O2 = trans-4-hydroxy-L-prolyl-[collagen] + succinate + CO2. Its function is as follows. Catalyzes the post-translational formation of 4-hydroxyproline in -Xaa-Pro-Gly- sequences in proline-rich peptide sequences of plant glycoproteins and other proteins. Hydroxylates preferentially prolines in second positions in the -Pro-Pro-Gly-triplets. Hydroxyprolines are important constituent of many plant cell wall glycoproteins such as extensins, hydroxyproline-rich glycoproteins, lectins and arabinogalactan proteins. Can hydroxylate collagen-like peptides and hypoxia-inducible transcription factor peptides. This Arabidopsis thaliana (Mouse-ear cress) protein is Prolyl 4-hydroxylase 1.